Reading from the N-terminus, the 84-residue chain is Cell division topological specificity factor (84 aa).

The protein belongs to the MinE family.

In terms of biological role, prevents the cell division inhibition by proteins MinC and MinD at internal division sites while permitting inhibition at polar sites. This ensures cell division at the proper site by restricting the formation of a division septum at the midpoint of the long axis of the cell. This is Cell division topological specificity factor from Pseudomonas syringae pv. syringae (strain B728a).